The following is a 353-amino-acid chain: UPF0421 protein YgaE (353 aa).

4 helical membrane passes run 20–40 (LASWIGLPAPIFAGIAAIFAI), 67–87 (VFGLIFGPSPIMIGLTAVIVI), 103–123 (LVTVIAILESAGDDFLMFALI), and 125–145 (TSTVILGVLSSFIVNLVFLPP).

It belongs to the UPF0421 family.

It is found in the cell membrane. The chain is UPF0421 protein YgaE (ygaE) from Bacillus subtilis (strain 168).